We begin with the raw amino-acid sequence, 187 residues long: Elongation factor P (187 aa).

It belongs to the elongation factor P family.

It localises to the cytoplasm. It participates in protein biosynthesis; polypeptide chain elongation. Its function is as follows. Involved in peptide bond synthesis. Stimulates efficient translation and peptide-bond synthesis on native or reconstituted 70S ribosomes in vitro. Probably functions indirectly by altering the affinity of the ribosome for aminoacyl-tRNA, thus increasing their reactivity as acceptors for peptidyl transferase. In Zymomonas mobilis subsp. mobilis (strain ATCC 31821 / ZM4 / CP4), this protein is Elongation factor P.